A 306-amino-acid polypeptide reads, in one-letter code: Pyridoxal 5'-phosphate synthase subunit PdxS (306 aa).

D36 is a binding site for D-ribose 5-phosphate. K93 serves as the catalytic Schiff-base intermediate with D-ribose 5-phosphate. Residue G165 coordinates D-ribose 5-phosphate. R177 contributes to the D-glyceraldehyde 3-phosphate binding site. D-ribose 5-phosphate is bound by residues G226 and 247 to 248 (GS).

Belongs to the PdxS/SNZ family. In the presence of PdxT, forms a dodecamer of heterodimers.

The catalysed reaction is aldehydo-D-ribose 5-phosphate + D-glyceraldehyde 3-phosphate + L-glutamine = pyridoxal 5'-phosphate + L-glutamate + phosphate + 3 H2O + H(+). The protein operates within cofactor biosynthesis; pyridoxal 5'-phosphate biosynthesis. Functionally, catalyzes the formation of pyridoxal 5'-phosphate from ribose 5-phosphate (RBP), glyceraldehyde 3-phosphate (G3P) and ammonia. The ammonia is provided by the PdxT subunit. Can also use ribulose 5-phosphate and dihydroxyacetone phosphate as substrates, resulting from enzyme-catalyzed isomerization of RBP and G3P, respectively. In Nocardia farcinica (strain IFM 10152), this protein is Pyridoxal 5'-phosphate synthase subunit PdxS.